We begin with the raw amino-acid sequence, 350 residues long: E3 ubiquitin-protein ligase TRIM63 (350 aa).

The RING-type zinc-finger motif lies at 23–79 (CPICLEMFTKPVVILPCQHNLCRKCANDIFQAANPYWTNRGGSVSMSGGRFRCPSCR). The segment at 74 to 218 (RCPSCRHEVI…LSQKFDTLYA (145 aa)) is interaction with TTN. The B box-type zinc-finger motif lies at 117 to 159 (GSHPMCKEHEDEKINIYCLTCEVPTCSLCKVFGAHQACEVAPL). Residues Cys122, His125, Cys145, and His151 each coordinate Zn(2+). The stretch at 207–269 (EELSQKFDTL…VETAIQSLDE (63 aa)) forms a coiled coil. The COS domain maps to 267–325 (LDEPGGATFLSSAKQLIKSNVEASKGCQLGKTEQGFENMDYFTLDLEHIAEALRAIDFG). Over residues 325 to 344 (GTDEEEEEFTEEEADEEEGV) the composition is skewed to acidic residues. The interval 325–350 (GTDEEEEEFTEEEADEEEGVTTEGHQ) is disordered.

Homodimer. Homooligomer and heterooligomer. Interacts with SUMO2, titin/TTN and GMEB1. Interacts with TRIM54 and probably with TRIM55. Interacts with TNNI3. Forms a ternary complex with RACK1 and PRKCE. Interacts with CKM.

It localises to the cytoplasm. The protein resides in the nucleus. The protein localises to the myofibril. Its subcellular location is the sarcomere. It is found in the m line. It localises to the z line. It catalyses the reaction S-ubiquitinyl-[E2 ubiquitin-conjugating enzyme]-L-cysteine + [acceptor protein]-L-lysine = [E2 ubiquitin-conjugating enzyme]-L-cysteine + N(6)-ubiquitinyl-[acceptor protein]-L-lysine.. It functions in the pathway protein modification; protein ubiquitination. In terms of biological role, E3 ubiquitin ligase. Mediates the ubiquitination and subsequent proteasomal degradation of CKM, GMEB1 and HIBADH. Regulates the proteasomal degradation of muscle proteins under amino acid starvation, where muscle protein is catabolized to provide other organs with amino acids. Inhibits de novo skeletal muscle protein synthesis under amino acid starvation. Regulates proteasomal degradation of cardiac troponin I/TNNI3 and probably of other sarcomeric-associated proteins. May play a role in striated muscle atrophy and hypertrophy by regulating an anti-hypertrophic PKC-mediated signaling pathway. May regulate the organization of myofibrils through TTN in muscle cells. This is E3 ubiquitin-protein ligase TRIM63 (Trim63) from Mus musculus (Mouse).